The chain runs to 398 residues: Tyrosine--tRNA ligase (398 aa).

The 'HIGH' region motif lies at 42-51; it reads PTAPDIHLGH. Residues 226 to 230 carry the 'KMSKS' region motif; the sequence is KMSKS. K229 contacts ATP. The S4 RNA-binding domain maps to 336–397; sequence LAIANLLKDA…GKRKFAKVTL (62 aa).

It belongs to the class-I aminoacyl-tRNA synthetase family. TyrS type 2 subfamily. As to quaternary structure, homodimer.

It localises to the cytoplasm. It carries out the reaction tRNA(Tyr) + L-tyrosine + ATP = L-tyrosyl-tRNA(Tyr) + AMP + diphosphate + H(+). In terms of biological role, catalyzes the attachment of tyrosine to tRNA(Tyr) in a two-step reaction: tyrosine is first activated by ATP to form Tyr-AMP and then transferred to the acceptor end of tRNA(Tyr). This Shewanella oneidensis (strain ATCC 700550 / JCM 31522 / CIP 106686 / LMG 19005 / NCIMB 14063 / MR-1) protein is Tyrosine--tRNA ligase.